Here is a 169-residue protein sequence, read N- to C-terminus: Phosphopantetheine adenylyltransferase (169 aa).

A substrate-binding site is contributed by S10. ATP contacts are provided by residues 10-11 (SF) and H18. The substrate site is built by K42, L74, and R88. Residues 89–91 (GLR), E99, and 124–130 (YAFLSSS) contribute to the ATP site.

It belongs to the bacterial CoaD family. Homohexamer. The cofactor is Mg(2+).

It is found in the cytoplasm. The catalysed reaction is (R)-4'-phosphopantetheine + ATP + H(+) = 3'-dephospho-CoA + diphosphate. The protein operates within cofactor biosynthesis; coenzyme A biosynthesis; CoA from (R)-pantothenate: step 4/5. Functionally, reversibly transfers an adenylyl group from ATP to 4'-phosphopantetheine, yielding dephospho-CoA (dPCoA) and pyrophosphate. This Geobacillus sp. (strain WCH70) protein is Phosphopantetheine adenylyltransferase.